A 241-amino-acid chain; its full sequence is Pyrroloquinoline-quinone synthase (241 aa).

This sequence belongs to the PqqC family.

It carries out the reaction 6-(2-amino-2-carboxyethyl)-7,8-dioxo-1,2,3,4,7,8-hexahydroquinoline-2,4-dicarboxylate + 3 O2 = pyrroloquinoline quinone + 2 H2O2 + 2 H2O + H(+). The protein operates within cofactor biosynthesis; pyrroloquinoline quinone biosynthesis. Ring cyclization and eight-electron oxidation of 3a-(2-amino-2-carboxyethyl)-4,5-dioxo-4,5,6,7,8,9-hexahydroquinoline-7,9-dicarboxylic-acid to PQQ. The sequence is that of Pyrroloquinoline-quinone synthase from Ruegeria pomeroyi (strain ATCC 700808 / DSM 15171 / DSS-3) (Silicibacter pomeroyi).